Consider the following 56-residue polypeptide: Large ribosomal subunit protein bL32 (56 aa).

The segment at 1–28 is disordered; sequence MAVQQNRKTRSKRGMRRSHDALTTAALS. Residues 7-16 show a composition bias toward basic residues; the sequence is RKTRSKRGMR.

Belongs to the bacterial ribosomal protein bL32 family.

In Vibrio vulnificus (strain CMCP6), this protein is Large ribosomal subunit protein bL32.